An 882-amino-acid chain; its full sequence is DNA mismatch repair protein MutS (882 aa).

Position 627–634 (627–634 (GPNMAGKS)) interacts with ATP.

It belongs to the DNA mismatch repair MutS family.

This protein is involved in the repair of mismatches in DNA. It is possible that it carries out the mismatch recognition step. This protein has a weak ATPase activity. This chain is DNA mismatch repair protein MutS, found in Anaeromyxobacter sp. (strain K).